Here is a 494-residue protein sequence, read N- to C-terminus: UDP-N-acetylmuramate--L-alanine ligase (494 aa).

Position 134–140 (Gly134–Thr140) interacts with ATP.

Belongs to the MurCDEF family.

The protein localises to the cytoplasm. It carries out the reaction UDP-N-acetyl-alpha-D-muramate + L-alanine + ATP = UDP-N-acetyl-alpha-D-muramoyl-L-alanine + ADP + phosphate + H(+). It functions in the pathway cell wall biogenesis; peptidoglycan biosynthesis. Its function is as follows. Cell wall formation. This is UDP-N-acetylmuramate--L-alanine ligase from Prochlorococcus marinus (strain NATL1A).